We begin with the raw amino-acid sequence, 377 residues long: Nucleoside diphosphate kinase homolog 7 (377 aa).

The 89-residue stretch at 3-91 (HSERFVFIAE…YTARQLGSKK (89 aa)) folds into the DM10 domain.

The protein belongs to the NDK family. In terms of assembly, component of sperm flagellar doublet microtubules. Component of the gamma-tubulin ring complex. As to expression, expressed in trachea multiciliated cells.

Its subcellular location is the cytoplasm. It is found in the cytoskeleton. The protein localises to the microtubule organizing center. The protein resides in the centrosome. It localises to the nucleus. Its subcellular location is the spindle. It is found in the cilium axoneme. The protein localises to the flagellum axoneme. The protein resides in the cell projection. It localises to the cilium. In terms of biological role, possesses an intrinsic kinase activity. Displays 3'-5' exonuclease activity with a preference for single-stranded DNA. Does not seem to have nucleoside diphosphate kinase activity. Functional component of the gamma-tubulin ring complex, implicated in the regulation of the microtubule-nucleating activity of the gamma-tubulin ring complex in centrosomes, in a kinase activity-dependent manner. Part of the dynein-decorated doublet microtubules (DMTs) in cilia axoneme, which is required for motile cilia beating. The chain is Nucleoside diphosphate kinase homolog 7 (NME7) from Bos taurus (Bovine).